The sequence spans 238 residues: Isoamyl acetate-hydrolyzing esterase (238 aa).

Serine 12 functions as the Nucleophile in the catalytic mechanism. Aspartate 187 acts as the Proton donor in catalysis. Histidine 190 functions as the Proton acceptor in the catalytic mechanism.

This sequence belongs to the 'GDSL' lipolytic enzyme family. IAH1 subfamily. As to quaternary structure, homodimer.

The catalysed reaction is 3-methylbutyl acetate + H2O = 3-methylbutanol + acetate + H(+). Its function is as follows. Plays a crucial role in the hydrolysis of isoamyl acetate in sake mash. Hydrolyzes short chain esters from acetate (C2) to hexanoate (C6), showing more specificity for shorter chain exters. No activity for decanoate (C10) esters. In Saccharomyces cerevisiae (strain ATCC 204508 / S288c) (Baker's yeast), this protein is Isoamyl acetate-hydrolyzing esterase.